A 177-amino-acid chain; its full sequence is HVA22-like protein a (177 aa).

Transmembrane regions (helical) follow at residues Val-18–Glu-38, Gln-47–Lys-67, and Leu-68–Ile-88.

It belongs to the DP1 family. In terms of tissue distribution, predominantly expressed in flower buds and stem.

The protein localises to the membrane. This is HVA22-like protein a (HVA22A) from Arabidopsis thaliana (Mouse-ear cress).